The chain runs to 120 residues: UPF0231 protein YacL (120 aa).

It belongs to the UPF0231 family.

This chain is UPF0231 protein YacL, found in Salmonella paratyphi A (strain ATCC 9150 / SARB42).